An 84-amino-acid polypeptide reads, in one-letter code: Small ribosomal subunit protein bS20 (84 aa).

Belongs to the bacterial ribosomal protein bS20 family.

Functionally, binds directly to 16S ribosomal RNA. This chain is Small ribosomal subunit protein bS20, found in Latilactobacillus sakei subsp. sakei (strain 23K) (Lactobacillus sakei subsp. sakei).